The sequence spans 607 residues: Protease Do-like 2, chloroplastic (607 aa).

The interval 41–104 (SSNIKRKSSR…LSDFSRDQQT (64 aa)) is disordered. The span at 87–104 (PKKEKKESLSDFSRDQQT) shows a compositional bias: basic and acidic residues. Residues 118-317 (VVKVYCTHTA…LTDYERNGKY (200 aa)) form a serine protease region. Residues His-159, Asp-190, and Ser-268 each act as charge relay system in the active site. Residues 308–403 (LTDYERNGKY…YLISQKFAGD (96 aa)) enclose the PDZ domain.

The protein belongs to the peptidase S1C family.

It is found in the plastid. Its subcellular location is the chloroplast thylakoid membrane. Serine protease that performs the primary cleavage of the photodamaged D1 protein in plant photosystem II. This chain is Protease Do-like 2, chloroplastic (DEGP2), found in Arabidopsis thaliana (Mouse-ear cress).